The following is a 504-amino-acid chain: Outer capsid protein VP5 (504 aa).

Residues 1–42 (MGKFTSFLKRAGSATKNALTSDAAKRMYKMAGKTLQKVVESE) form an involved in membrane permeabilization region.

This sequence belongs to the orbivirus VP5 family.

It localises to the virion. VP5 protein is one of the two proteins (with VP2) which constitute the virus particle outer capsid. Acts as a membrane permeabilization protein that mediates release of viral particles from endosomal compartments into the cytoplasm. Permeabilization activity is probably negatively regulated by VP2 and is triggered by endosomal degradation of VP2 and exposure to low pH. The polypeptide is Outer capsid protein VP5 (Segment-6) (African horse sickness virus 6 (AHSV-6)).